Here is a 395-residue protein sequence, read N- to C-terminus: Phosphoribulokinase, chloroplastic (395 aa).

Residues 1-46 constitute a chloroplast transit peptide; sequence MAVSTIYSTQALNSTHFLTSSSSSKQVFLYRRQPQTNRRFNTLITC. C61 and C100 are joined by a disulfide.

It belongs to the phosphoribulokinase family.

The protein resides in the plastid. It localises to the chloroplast. The catalysed reaction is D-ribulose 5-phosphate + ATP = D-ribulose 1,5-bisphosphate + ADP + H(+). It functions in the pathway carbohydrate biosynthesis; Calvin cycle. With respect to regulation, light regulated via thioredoxin by reversible oxidation/reduction of sulfhydryl/disulfide groups. The polypeptide is Phosphoribulokinase, chloroplastic (Arabidopsis thaliana (Mouse-ear cress)).